The primary structure comprises 147 residues: Putative acetyltransferase BSU40680 (147 aa).

Residues 1–144 (MNVKKITSEQ…PHVLMTKQDD (144 aa)) form the N-acetyltransferase domain. CoA-binding positions include 74–76 (ICI) and 115–117 (GFY).

This sequence belongs to the UPF0039 (ElaA) family.

Functionally, could catalyze the transfer of an acetyl group from acetyl coenzyme A (AcCoA) to an acceptor substrate and release both CoA and the acetylated product. The chain is Putative acetyltransferase BSU40680 (yybD) from Bacillus subtilis (strain 168).